We begin with the raw amino-acid sequence, 38 residues long: Large ribosomal subunit protein bL36 (38 aa).

It belongs to the bacterial ribosomal protein bL36 family.

This chain is Large ribosomal subunit protein bL36, found in Azotobacter vinelandii (strain DJ / ATCC BAA-1303).